Consider the following 177-residue polypeptide: Inorganic pyrophosphatase (177 aa).

Substrate-binding residues include Lys31, Arg45, and Tyr57. Mg(2+) contacts are provided by Asp67, Asp72, and Asp104. Tyr142 is a substrate binding site.

Belongs to the PPase family. Homohexamer. The cofactor is Mg(2+).

Its subcellular location is the cytoplasm. The enzyme catalyses diphosphate + H2O = 2 phosphate + H(+). Its function is as follows. Catalyzes the hydrolysis of inorganic pyrophosphate (PPi) forming two phosphate ions. This Neisseria meningitidis serogroup B (strain ATCC BAA-335 / MC58) protein is Inorganic pyrophosphatase.